The following is a 341-amino-acid chain: MIKQAIEKVVNHENLTFEESEAVLDEIMNGEAYEVQTASLLTALTAKNPTIDEIAGAAASMRSHALAFPETKDVLEIVGTGGDHANTFNISTTSAIVVAATGTQVAKHGNRAASSKSGAADVLEALGLDINETPAVSYESLQENNLAFLFAQEYHKSMKYVAPVRKQLGFRTIFNILGPLANPAHPTHQLLGVYDETLLEPLANVLKKLGVTNAMVVHGRDGLDEMTTADETAVVELQDDHLTKYTVTPEQFGLKRRQRADLVGGTPEANANITRRILAGDHGPQRDIVLLNAGAALHVAHPDLSIQAGIDLAAKTIDDGKAFEELNRLLAFSDKRKDVVA.

5-phospho-alpha-D-ribose 1-diphosphate is bound by residues glycine 79, 82-83 (GD), threonine 87, 89-92 (NIST), 107-115 (KHGNRAASS), and alanine 119. Glycine 79 provides a ligand contact to anthranilate. Serine 91 lines the Mg(2+) pocket. Position 110 (asparagine 110) interacts with anthranilate. Arginine 165 is a binding site for anthranilate. Mg(2+) contacts are provided by aspartate 224 and glutamate 225.

This sequence belongs to the anthranilate phosphoribosyltransferase family. As to quaternary structure, homodimer. Mg(2+) serves as cofactor.

It carries out the reaction N-(5-phospho-beta-D-ribosyl)anthranilate + diphosphate = 5-phospho-alpha-D-ribose 1-diphosphate + anthranilate. It participates in amino-acid biosynthesis; L-tryptophan biosynthesis; L-tryptophan from chorismate: step 2/5. In terms of biological role, catalyzes the transfer of the phosphoribosyl group of 5-phosphorylribose-1-pyrophosphate (PRPP) to anthranilate to yield N-(5'-phosphoribosyl)-anthranilate (PRA). The polypeptide is Anthranilate phosphoribosyltransferase (Lacticaseibacillus casei (strain BL23) (Lactobacillus casei)).